Here is a 300-residue protein sequence, read N- to C-terminus: 17-beta-hydroxysteroid dehydrogenase 13 (300 aa).

Residues 1–19 (MNLILELLLLVGIIIYSYL) form the signal peptide. Ser-33 is modified (phosphoserine). An NAD(+)-binding site is contributed by 40 to 67 (LITGAGHGIGRLTAYEFAKQKSRLVLWD). A Phosphoserine modification is found at Ser-69. At Lys-79 the chain carries N6-acetyllysine. Residue Ser-172 coordinates substrate. The Proton acceptor role is filled by Tyr-185. Lys-189 serves as a coordination point for NAD(+).

The protein belongs to the short-chain dehydrogenases/reductases (SDR) family.

It localises to the lipid droplet. The protein localises to the endoplasmic reticulum. It catalyses the reaction 17beta-estradiol + NAD(+) = estrone + NADH + H(+). The catalysed reaction is all-trans-retinol + NAD(+) = all-trans-retinal + NADH + H(+). It carries out the reaction all-trans-retinal + NAD(+) + H2O = all-trans-retinoate + NADH + 2 H(+). Plays a pivotal role in hepatic lipid metabolism. In vitro, it catalyzes the oxidation of a variety of lipid substrates, including 17beta-estradiol, retinol, retinal, and leukotriene B4. In Rattus norvegicus (Rat), this protein is 17-beta-hydroxysteroid dehydrogenase 13 (Hsd17b13).